The sequence spans 642 residues: Threonine--tRNA ligase (642 aa).

Positions 1–61 constitute a TGS domain; it reads MIKVTFPDGN…EHDGKLQLLT (61 aa). The interval 240–539 is catalytic; the sequence is DHRKIGKDLD…LIEEYKGSFP (300 aa). Cys-334, His-385, and His-516 together coordinate Zn(2+).

It belongs to the class-II aminoacyl-tRNA synthetase family. Homodimer. Requires Zn(2+) as cofactor.

The protein localises to the cytoplasm. The enzyme catalyses tRNA(Thr) + L-threonine + ATP = L-threonyl-tRNA(Thr) + AMP + diphosphate + H(+). Functionally, catalyzes the attachment of threonine to tRNA(Thr) in a two-step reaction: L-threonine is first activated by ATP to form Thr-AMP and then transferred to the acceptor end of tRNA(Thr). Also edits incorrectly charged L-seryl-tRNA(Thr). This is Threonine--tRNA ligase from Acholeplasma laidlawii (strain PG-8A).